Reading from the N-terminus, the 139-residue chain is Small ribosomal subunit protein uS12 (139 aa).

Residues 1–55 are disordered; the sequence is MPTINQLIRKGRKAKVKKSDSPALNKGYNSFKKVQTDLSSPQKRGVCTRVGTMTP. Residues 32-42 are compositionally biased toward polar residues; it reads KKVQTDLSSPQ.

It belongs to the universal ribosomal protein uS12 family. Part of the 30S ribosomal subunit. Contacts proteins S8 and S17. May interact with IF1 in the 30S initiation complex.

Its function is as follows. With S4 and S5 plays an important role in translational accuracy. In terms of biological role, interacts with and stabilizes bases of the 16S rRNA that are involved in tRNA selection in the A site and with the mRNA backbone. Located at the interface of the 30S and 50S subunits, it traverses the body of the 30S subunit contacting proteins on the other side and probably holding the rRNA structure together. The combined cluster of proteins S8, S12 and S17 appears to hold together the shoulder and platform of the 30S subunit. The protein is Small ribosomal subunit protein uS12 of Halalkalibacterium halodurans (strain ATCC BAA-125 / DSM 18197 / FERM 7344 / JCM 9153 / C-125) (Bacillus halodurans).